Here is a 444-residue protein sequence, read N- to C-terminus: Putative cytochrome P450 120 (444 aa).

Residue cysteine 391 participates in heme binding.

It belongs to the cytochrome P450 family. The cofactor is heme.

The polypeptide is Putative cytochrome P450 120 (cyp120) (Synechocystis sp. (strain ATCC 27184 / PCC 6803 / Kazusa)).